We begin with the raw amino-acid sequence, 215 residues long: MESSNLYSKLLNAPKNAPVFLSQNLEADFIVKAYTFGLFPWTSKPVTWWCPDPRCILIPNQIHIQKNMKKFINLYQIKLDYDFLKLITLCRDTRSQSWINDEFITTYYKLFTQGYAHSLELYENNELIGGIYGLILGKVFFGESMVSIKKNASKVAMIKLCDLLKPYDFIIDCQVYNQHLEFMGAHNISRKEFLNILKEKCNQESGFKNFKDLIT.

This sequence belongs to the L/F-transferase family.

The protein resides in the cytoplasm. The enzyme catalyses N-terminal L-lysyl-[protein] + L-leucyl-tRNA(Leu) = N-terminal L-leucyl-L-lysyl-[protein] + tRNA(Leu) + H(+). It carries out the reaction N-terminal L-arginyl-[protein] + L-leucyl-tRNA(Leu) = N-terminal L-leucyl-L-arginyl-[protein] + tRNA(Leu) + H(+). The catalysed reaction is L-phenylalanyl-tRNA(Phe) + an N-terminal L-alpha-aminoacyl-[protein] = an N-terminal L-phenylalanyl-L-alpha-aminoacyl-[protein] + tRNA(Phe). Functionally, functions in the N-end rule pathway of protein degradation where it conjugates Leu, Phe and, less efficiently, Met from aminoacyl-tRNAs to the N-termini of proteins containing an N-terminal arginine or lysine. This chain is Leucyl/phenylalanyl-tRNA--protein transferase, found in Campylobacter jejuni (strain RM1221).